Reading from the N-terminus, the 763-residue chain is Phosphoglycerol transferase I (763 aa).

The next 4 membrane-spanning stretches (helical) occupy residues 1 to 21 (MSELLSIALFLASVLIYAWKA), 26 to 46 (WWFAAILAVLGLFVVLNITLY), 77 to 97 (ILPGAGIVLALAAVFSALGWV), and 108 to 128 (FGYSLLALLLALGSVDASPAF).

The protein belongs to the OpgB family.

The protein resides in the cell inner membrane. It catalyses the reaction a phosphatidylglycerol + a membrane-derived-oligosaccharide D-glucose = a 1,2-diacyl-sn-glycerol + a membrane-derived-oligosaccharide 6-(glycerophospho)-D-glucose.. It functions in the pathway glycan metabolism; osmoregulated periplasmic glucan (OPG) biosynthesis. Functionally, transfers a phosphoglycerol residue from phosphatidylglycerol to the membrane-bound nascent glucan backbones. This is Phosphoglycerol transferase I from Citrobacter koseri (strain ATCC BAA-895 / CDC 4225-83 / SGSC4696).